A 24-amino-acid polypeptide reads, in one-letter code: Brevinin-1Pd (24 aa).

Cysteines 18 and 24 form a disulfide.

As to expression, expressed by the skin glands.

It localises to the secreted. Antibacterial activity against Gram-positive bacterium S.aureus and Gram-negative bacterium E.coli. Has activity against C.albicans. This chain is Brevinin-1Pd, found in Lithobates pipiens (Northern leopard frog).